We begin with the raw amino-acid sequence, 251 residues long: uncharacterized protein (251 aa).

This sequence to Anabaena PCC 7120 alr2406.

This is an uncharacterized protein from Synechocystis sp. (strain ATCC 27184 / PCC 6803 / Kazusa).